The chain runs to 946 residues: Serine/threonine-protein kinase PLK4 (946 aa).

Residues Phe-12–Met-265 enclose the Protein kinase domain. ATP-binding positions include Leu-18 to Val-26 and Lys-41. Asp-136 (proton acceptor) is an active-site residue. A disordered region spans residues His-330 to Glu-395. Residues Arg-378 to Ser-394 show a composition bias toward polar residues. In terms of domain architecture, Cryptic POLO box 1 (CPB1) spans Thr-566–Lys-679. Residues Met-680–Pro-792 form the Cryptic POLO box 2 (CPB2) domain. Residues Thr-789–Ile-828 form a disordered region. Residues Ser-809–Ile-828 show a composition bias toward polar residues. The region spanning Gln-864 to Ser-942 is the POLO box domain.

It belongs to the protein kinase superfamily. Ser/Thr protein kinase family. CDC5/Polo subfamily. As to quaternary structure, homodimer. Ubiquitinated; leading to its degradation by the proteasome.

The protein resides in the cytoplasm. The protein localises to the cytoskeleton. It is found in the microtubule organizing center. Its subcellular location is the centrosome. It localises to the centriole. The catalysed reaction is L-seryl-[protein] + ATP = O-phospho-L-seryl-[protein] + ADP + H(+). It catalyses the reaction L-threonyl-[protein] + ATP = O-phospho-L-threonyl-[protein] + ADP + H(+). Serine/threonine-protein kinase that plays a central role in centriole duplication. Able to trigger procentriole formation on the surface of the parental centriole cylinder, leading to the recruitment of centriole biogenesis proteins such as sass6, cpap, ccp110, cep135 and gamma-tubulin. When overexpressed, it is able to induce centrosome amplification through the simultaneous generation of multiple procentrioles adjoining each parental centriole during S phase. Its central role in centriole replication suggests a possible role in tumorigenesis, centrosome aberrations being frequently observed in tumors. Also involved in deuterosome-mediated centriole amplification in multiciliated that can generate more than 100 centrioles. The sequence is that of Serine/threonine-protein kinase PLK4 from Xenopus tropicalis (Western clawed frog).